Consider the following 589-residue polypeptide: Protein OS-9 homolog (589 aa).

A signal peptide spans 1–21 (MFSILNKLGIIWLALANISNC). N-linked (GlcNAc...) asparagine glycosylation is found at N17, N61, and N90. Residues 130–288 (KDCVFAYGSN…VIGVPKLCSL (159 aa)) form the MRH domain. The cysteines at positions 132 and 148 are disulfide-linked. Residues W143, Q155, D241, R247, E270, and Y276 each coordinate a mannooligosaccharide derivative. Intrachain disulfides connect C240–C274 and C255–C286. A glycan (N-linked (GlcNAc...) asparagine) is linked at N426. The segment at 497–520 (GKGSALDSTNNDKNNKATAENDKQ) is disordered. Over residues 509-519 (KNNKATAENDK) the composition is skewed to basic and acidic residues. Residues 586–589 (HDEL) carry the Prevents secretion from ER motif.

This sequence belongs to the OS-9 family. In terms of assembly, interacts with missfolded ER lumenal proteins.

It localises to the endoplasmic reticulum membrane. Its function is as follows. Lectin involved in the quality control of the secretory pathway. As a member of the endoplasmic reticulum-associated degradation lumenal (ERAD-L) surveillance system, targets misfolded endoplasmic reticulum lumenal glycoproteins for degradation. This Debaryomyces hansenii (strain ATCC 36239 / CBS 767 / BCRC 21394 / JCM 1990 / NBRC 0083 / IGC 2968) (Yeast) protein is Protein OS-9 homolog (YOS9).